Consider the following 175-residue polypeptide: Ribosome maturation factor RimM (175 aa).

The region spanning 93 to 167 is the PRC barrel domain; the sequence is DDEFYYSDLI…YIIITLPEVI (75 aa).

Belongs to the RimM family. As to quaternary structure, binds ribosomal protein uS19.

Its subcellular location is the cytoplasm. Functionally, an accessory protein needed during the final step in the assembly of 30S ribosomal subunit, possibly for assembly of the head region. Essential for efficient processing of 16S rRNA. May be needed both before and after RbfA during the maturation of 16S rRNA. It has affinity for free ribosomal 30S subunits but not for 70S ribosomes. The chain is Ribosome maturation factor RimM from Ehrlichia chaffeensis (strain ATCC CRL-10679 / Arkansas).